The primary structure comprises 403 residues: G2/mitotic-specific cyclin-B1 (403 aa).

The protein belongs to the cyclin family. Cyclin AB subfamily. Interacts with the CDC2 protein kinase to form a serine/threonine kinase holoenzyme complex also known as maturation promoting factor (MPF). The cyclin subunit imparts substrate specificity to the complex.

Essential for the control of the cell cycle at the G2/M (mitosis) transition. This Anguilla japonica (Japanese eel) protein is G2/mitotic-specific cyclin-B1 (ccnb1).